Consider the following 322-residue polypeptide: uncharacterized protein (322 aa).

The region spanning 26–267 is the Radical SAM core domain; it reads HFGHKVFKVA…CDQLEIIPPE (242 aa). Residues Cys-42, Cys-54, and Cys-57 each coordinate [4Fe-4S] cluster.

This sequence belongs to the radical SAM superfamily. Requires [4Fe-4S] cluster as cofactor.

This is an uncharacterized protein from Bacillus subtilis (strain 168).